A 216-amino-acid polypeptide reads, in one-letter code: Probable disulfide bond formation protein D (216 aa).

The N-terminal stretch at 1–25 (MKSNKLMALGIVFSIAVLIVIGTIA) is a signal peptide. The cysteines at positions 65 and 68 are disulfide-linked.

It belongs to the thioredoxin family. DsbA subfamily.

In terms of biological role, may be required for disulfide bond formation in some proteins. This is Probable disulfide bond formation protein D (bdbD) from Bacillus cereus (strain ATCC 14579 / DSM 31 / CCUG 7414 / JCM 2152 / NBRC 15305 / NCIMB 9373 / NCTC 2599 / NRRL B-3711).